Here is a 415-residue protein sequence, read N- to C-terminus: Small RNA 2'-O-methyltransferase (415 aa).

2 residues coordinate S-adenosyl-L-methionine: S99 and D117. The Mg(2+) site is built by E169, E172, and H173.

Belongs to the methyltransferase superfamily. HEN1 family. Mg(2+) serves as cofactor.

It localises to the cytoplasm. The catalysed reaction is small RNA 3'-end nucleotide + S-adenosyl-L-methionine = small RNA 3'-end 2'-O-methylnucleotide + S-adenosyl-L-homocysteine + H(+). Functionally, methyltransferase that adds a 2'-O-methyl group at the 3'-end of piRNAs, a class of 24 to 30 nucleotide RNAs that are generated by a Dicer-independent mechanism and are primarily derived from transposons and other repeated sequence elements. This probably protects the 3'-end of piRNAs from uridylation activity and subsequent degradation. Stabilization of piRNAs is essential for gametogenesis. The sequence is that of Small RNA 2'-O-methyltransferase from Bombyx mori (Silk moth).